We begin with the raw amino-acid sequence, 451 residues long: UPF0210 protein NGO_1297 (451 aa).

Belongs to the UPF0210 family. As to quaternary structure, homodimer.

The protein is UPF0210 protein NGO_1297 of Neisseria gonorrhoeae (strain ATCC 700825 / FA 1090).